We begin with the raw amino-acid sequence, 164 residues long: SsrA-binding protein (164 aa).

The tract at residues 143 to 164 is disordered; sequence HDKRQDEKQKSIKKEINSVLKR. Residues 145 to 158 are compositionally biased toward basic and acidic residues; sequence KRQDEKQKSIKKEI.

Belongs to the SmpB family.

It localises to the cytoplasm. Its function is as follows. Required for rescue of stalled ribosomes mediated by trans-translation. Binds to transfer-messenger RNA (tmRNA), required for stable association of tmRNA with ribosomes. tmRNA and SmpB together mimic tRNA shape, replacing the anticodon stem-loop with SmpB. tmRNA is encoded by the ssrA gene; the 2 termini fold to resemble tRNA(Ala) and it encodes a 'tag peptide', a short internal open reading frame. During trans-translation Ala-aminoacylated tmRNA acts like a tRNA, entering the A-site of stalled ribosomes, displacing the stalled mRNA. The ribosome then switches to translate the ORF on the tmRNA; the nascent peptide is terminated with the 'tag peptide' encoded by the tmRNA and targeted for degradation. The ribosome is freed to recommence translation, which seems to be the essential function of trans-translation. This is SsrA-binding protein from Prochlorococcus marinus (strain MIT 9312).